The following is a 44-amino-acid chain: Photosystem I reaction center subunit IX (44 aa).

A helical membrane pass occupies residues 7-27; sequence YLSVAPVLATLWFGSLAGLLI.

The protein belongs to the PsaJ family.

It localises to the plastid. It is found in the chloroplast thylakoid membrane. May help in the organization of the PsaE and PsaF subunits. This chain is Photosystem I reaction center subunit IX, found in Illicium oligandrum (Star anise).